The primary structure comprises 199 residues: Ribonuclease P protein subunit p25 (199 aa).

The segment covering 1–11 (MENFRKVRSEE) has biased composition (basic and acidic residues). Disordered regions lie at residues 1–28 (MENF…SGPF) and 144–199 (LDPR…DQTA). The segment covering 151–166 (YQPPNPHPGPSSPPAA) has biased composition (pro residues). A phosphoserine mark is found at Ser172 and Ser182.

This sequence belongs to the histone-like Alba family. Component of nuclear RNase P and RNase MRP ribonucleoproteins. RNase P consists of a catalytic RNA moiety and 10 different protein chains; POP1, POP4, POP5, POP7, RPP14, RPP21, RPP25, RPP30, RPP38 and RPP40. Within the RNase P complex, POP1, POP7 and RPP25 form the 'finger' subcomplex, POP5, RPP14, RPP40 and homodimeric RPP30 form the 'palm' subcomplex, and RPP21, POP4 and RPP38 form the 'wrist' subcomplex. All subunits of the RNase P complex interact with the catalytic RNA. Several subunits of RNase P are also part of the RNase MRP complex. RNase MRP consists of a catalytic RNA moiety and about 8 protein subunits; POP1, POP7, RPP25, RPP30, RPP38, RPP40 and possibly also POP4 and POP5. POP7 forms a heterodimer with RPP25 that binds to the P3 stem loop of the catalytic RNA.

Its subcellular location is the nucleus. It localises to the nucleolus. Its function is as follows. Component of ribonuclease P, a ribonucleoprotein complex that generates mature tRNA molecules by cleaving their 5'-ends. Also a component of the MRP ribonuclease complex, which cleaves pre-rRNA sequences. The chain is Ribonuclease P protein subunit p25 (RPP25) from Homo sapiens (Human).